The chain runs to 560 residues: Protein tweety homolog 3 (560 aa).

The Extracellular segment spans residues 1-43 (MAAVVNYSPPWWVNLFHRLPHFNLQFQQTSSDFRPDDSDYQKA). A helical membrane pass occupies residues 44–64 (VLLLGAAALVCLALDLLFLLF). The Cytoplasmic portion of the chain corresponds to 65–87 (YSFWLCCCRRKNHDSPNADCCCT). The helical transmembrane segment at 88 to 108 (AWCVIIATLVCSAGIAVGFYG) threads the bilayer. Topologically, residues 109–212 (NGETCDGVTR…TEQYDWYRWL (104 aa)) are extracellular. Ca(2+) is bound by residues Glu-111 and Asp-114. Residues Asn-127 and Asn-145 are each glycosylated (N-linked (GlcNAc...) asparagine). The chain crosses the membrane as a helical span at residues 213–233 (GYLGLLLFDVIICLLVLVGLI). At 234-238 (RNSRS) the chain is on the cytoplasmic side. The chain crosses the membrane as a helical span at residues 239–259 (ILIGVCFLGVLTLVISWASLG). The Extracellular portion of the chain corresponds to 260–387 (LEFSFAVGAS…LTGLCYDGVE (128 aa)). 2 cysteine pairs are disulfide-bonded: Cys-272-Cys-382 and Cys-300-Cys-367. Asn-352 carries an N-linked (GlcNAc...) asparagine glycan. A helical membrane pass occupies residues 388 to 408 (GLIYLVLFSFVTALMFSSIVC). Residues 409-560 (SVPHTWQSKR…AIHRPHSAIH (152 aa)) lie on the Cytoplasmic side of the membrane. 2 disordered regions span residues 415 to 435 (QSKRSEEEDGDETSATLGSRA) and 486 to 560 (TPRC…SAIH). The span at 539-549 (TSRSAPNSRPN) shows a compositional bias: polar residues.

It belongs to the tweety family. As to quaternary structure, homotetramer; disulfide-linked. Forms cis-homodimers in the presence of Ca(2+).

It localises to the cell membrane. It catalyses the reaction chloride(in) = chloride(out). The catalysed reaction is L-glutamate(out) = L-glutamate(in). Its function is as follows. May act as a calcium-independent, swelling-dependent volume-regulated anion channel (VRAC-swell) which plays a pivotal role in the process of regulatory volume decrease (RVD) in the brain through the efflux of anions like chloride and organic osmolytes like glutamate. Probable large-conductance Ca(2+)-activated chloride channel. This chain is Protein tweety homolog 3 (ttyh3b), found in Danio rerio (Zebrafish).